The sequence spans 476 residues: Ribulose bisphosphate carboxylase large chain (476 aa).

The propeptide occupies 1-2 (MS). Pro3 carries the N-acetylproline modification. At Lys14 the chain carries N6,N6,N6-trimethyllysine. The substrate site is built by Asn123 and Thr173. The active-site Proton acceptor is the Lys175. Position 177 (Lys177) interacts with substrate. Mg(2+) contacts are provided by Lys201, Asp203, and Glu204. The residue at position 201 (Lys201) is an N6-carboxylysine. Residue His294 is the Proton acceptor of the active site. Residues Arg295, His327, and Ser379 each contribute to the substrate site.

It belongs to the RuBisCO large chain family. Type I subfamily. In terms of assembly, heterohexadecamer of 8 large chains and 8 small chains; disulfide-linked. The disulfide link is formed within the large subunit homodimers. It depends on Mg(2+) as a cofactor. In terms of processing, the disulfide bond which can form in the large chain dimeric partners within the hexadecamer appears to be associated with oxidative stress and protein turnover.

It is found in the plastid. It localises to the chloroplast. It carries out the reaction 2 (2R)-3-phosphoglycerate + 2 H(+) = D-ribulose 1,5-bisphosphate + CO2 + H2O. The enzyme catalyses D-ribulose 1,5-bisphosphate + O2 = 2-phosphoglycolate + (2R)-3-phosphoglycerate + 2 H(+). Functionally, ruBisCO catalyzes two reactions: the carboxylation of D-ribulose 1,5-bisphosphate, the primary event in carbon dioxide fixation, as well as the oxidative fragmentation of the pentose substrate in the photorespiration process. Both reactions occur simultaneously and in competition at the same active site. The protein is Ribulose bisphosphate carboxylase large chain of Liriodendron tulipifera (Tuliptree).